We begin with the raw amino-acid sequence, 150 residues long: MRIVLQVVSRASVTVAEETVGEIEGPGLLALVGLTHTDTPETVSRLAGKVAGLRILPGETSCADGPSPVLAVSQFTLYGDVRKGRRPSWSRAAPGQQSEPLFEAFVAALRERGIPVRTGRFGAHMEVSLVNDGPVTVLVDSDELDRPRRG.

Positions 133–134 match the Gly-cisPro motif, important for rejection of L-amino acids motif; that stretch reads GP.

It belongs to the DTD family. As to quaternary structure, homodimer.

It localises to the cytoplasm. The catalysed reaction is glycyl-tRNA(Ala) + H2O = tRNA(Ala) + glycine + H(+). It catalyses the reaction a D-aminoacyl-tRNA + H2O = a tRNA + a D-alpha-amino acid + H(+). An aminoacyl-tRNA editing enzyme that deacylates mischarged D-aminoacyl-tRNAs. Also deacylates mischarged glycyl-tRNA(Ala), protecting cells against glycine mischarging by AlaRS. Acts via tRNA-based rather than protein-based catalysis; rejects L-amino acids rather than detecting D-amino acids in the active site. By recycling D-aminoacyl-tRNA to D-amino acids and free tRNA molecules, this enzyme counteracts the toxicity associated with the formation of D-aminoacyl-tRNA entities in vivo and helps enforce protein L-homochirality. The sequence is that of D-aminoacyl-tRNA deacylase from Kocuria rhizophila (strain ATCC 9341 / DSM 348 / NBRC 103217 / DC2201).